Here is a 408-residue protein sequence, read N- to C-terminus: Neutral cholesterol ester hydrolase 1 (408 aa).

At 1 to 4 (MRSS) the chain is on the cytoplasmic side. The helical; Signal-anchor for type II membrane protein transmembrane segment at 5–25 (CVLLAALLALAAYYVYIPLPS) threads the bilayer. Residues 26–408 (AVSDPWKLML…SYIKWLDQNL (383 aa)) are Lumenal-facing. Positions 113-115 (HGG) match the Involved in the stabilization of the negatively charged intermediate by the formation of the oxyanion hole motif. The active site involves Ser191. The N-linked (GlcNAc...) asparagine glycan is linked to Asn270. The active site involves Asp348. N-linked (GlcNAc...) asparagine glycosylation is present at Asn367. His378 is a catalytic residue. N-linked (GlcNAc...) asparagine glycosylation is present at Asn389.

This sequence belongs to the 'GDXG' lipolytic enzyme family. N-glycosylated. Present in brain, heart, kidney, lung, spinal cord and testis but not liver (at protein level). Expressed in peritoneal macrophages and kidney.

Its subcellular location is the cell membrane. The protein resides in the microsome. It catalyses the reaction a 1-O-alkyl-2-acetyl-sn-glycerol + H2O = a 1-O-alkyl-sn-glycerol + acetate + H(+). The enzyme catalyses 1-O-hexadecyl-2-acetyl-sn-glycerol + H2O = 1-O-hexadecyl-sn-glycerol + acetate + H(+). The catalysed reaction is a cholesterol ester + H2O = cholesterol + a fatty acid + H(+). It carries out the reaction cholesteryl (9Z-octadecenoate) + H2O = cholesterol + (9Z)-octadecenoate + H(+). Its activity is regulated as follows. Inhibited by bulky trifluoromethyl ketones. Its function is as follows. Hydrolyzes 2-acetyl monoalkylglycerol ether (1-O-alkyl-2-acetyl-sn-glycerol), the penultimate precursor of the pathway for de novo synthesis of platelet-activating factor. May be responsible for the hydrolysis of cholesterol esters (such as cholesteryl (9Z-octadecenoate)) in macrophages. Also involved in organ detoxification by hydrolyzing exogenous organophosphorus compounds. The chain is Neutral cholesterol ester hydrolase 1 (Nceh1) from Mus musculus (Mouse).